We begin with the raw amino-acid sequence, 509 residues long: Maturase K (509 aa).

This sequence belongs to the intron maturase 2 family. MatK subfamily.

It localises to the plastid. The protein resides in the chloroplast. In terms of biological role, usually encoded in the trnK tRNA gene intron. Probably assists in splicing its own and other chloroplast group II introns. This chain is Maturase K, found in Amentotaxus argotaenia (Chinese flowering yew).